The primary structure comprises 282 residues: Nicotianamine synthase-like 5 protein (282 aa).

This sequence belongs to the nicotianamine synthase (NAS)-like family.

In Hordeum vulgare (Barley), this protein is Nicotianamine synthase-like 5 protein (NAS5).